The chain runs to 301 residues: Glutamyl-Q tRNA(Asp) synthetase (301 aa).

Residues 9–13 (RFAPS) and glutamate 45 each bind L-glutamate. The short motif at 12–22 (PSPTGPLHLGS) is the 'HIGH' region element. Residues cysteine 101, cysteine 103, tyrosine 121, and cysteine 125 each contribute to the Zn(2+) site. Tyrosine 179 and arginine 197 together coordinate L-glutamate. Positions 235 to 239 (KLSKQ) match the 'KMSKS' region motif. Lysine 238 lines the ATP pocket.

Belongs to the class-I aminoacyl-tRNA synthetase family. GluQ subfamily. Zn(2+) is required as a cofactor.

Its function is as follows. Catalyzes the tRNA-independent activation of glutamate in presence of ATP and the subsequent transfer of glutamate onto a tRNA(Asp). Glutamate is transferred on the 2-amino-5-(4,5-dihydroxy-2-cyclopenten-1-yl) moiety of the queuosine in the wobble position of the QUC anticodon. The polypeptide is Glutamyl-Q tRNA(Asp) synthetase (Thiobacillus denitrificans (strain ATCC 25259 / T1)).